The chain runs to 374 residues: Alanine racemase (374 aa).

The active-site Proton acceptor; specific for D-alanine is Lys40. Lys40 carries the post-translational modification N6-(pyridoxal phosphate)lysine. Arg139 provides a ligand contact to substrate. The Proton acceptor; specific for L-alanine role is filled by Tyr261. Met309 is a substrate binding site.

The protein belongs to the alanine racemase family. Requires pyridoxal 5'-phosphate as cofactor.

The enzyme catalyses L-alanine = D-alanine. It participates in amino-acid biosynthesis; D-alanine biosynthesis; D-alanine from L-alanine: step 1/1. In terms of biological role, catalyzes the interconversion of L-alanine and D-alanine. May also act on other amino acids. The sequence is that of Alanine racemase (alr) from Rhodospirillum rubrum (strain ATCC 11170 / ATH 1.1.1 / DSM 467 / LMG 4362 / NCIMB 8255 / S1).